Consider the following 80-residue polypeptide: Large ribosomal subunit protein bL31B (80 aa).

Belongs to the bacterial ribosomal protein bL31 family. Type B subfamily. As to quaternary structure, part of the 50S ribosomal subunit.

In Streptococcus thermophilus (strain CNRZ 1066), this protein is Large ribosomal subunit protein bL31B.